Here is a 166-residue protein sequence, read N- to C-terminus: SUMO-conjugating enzyme UBC9 (166 aa).

The 154-residue stretch at 4–157 (IAAGRLAEER…VKKEAVKYAA (154 aa)) folds into the UBC core domain. The Glycyl thioester intermediate role is filled by cysteine 93.

Belongs to the ubiquitin-conjugating enzyme family. In terms of assembly, interacts with brd-1 and rad-51. Interacts with smo-1 and sop-2. Interacts with bet-1 (via BROMO domain 2). Interacts with isoforms 1 and 2 of X-box-binding protein xbp-1.

Its subcellular location is the nucleus envelope. It participates in protein modification; protein sumoylation. In terms of biological role, accepts the ubiquitin-like protein smo-1 from the aos-1-uba-2 E1 complex and catalyzes its covalent attachment to other proteins with the help of an E3 ligase such as gei-17. Required to sumoylate the ETS transcription factor lin-1, Polycomb protein sop-2, and intermediate filament proteins, such as ifb-1. Required for embryonic development, fertility, vulval morphogenesis, inhibition of vulval cell fates, lifespan, and neuromuscular activity. The protein is SUMO-conjugating enzyme UBC9 of Caenorhabditis elegans.